Here is a 249-residue protein sequence, read N- to C-terminus: 1-(5-phosphoribosyl)-5-[(5-phosphoribosylamino)methylideneamino] imidazole-4-carboxamide isomerase (249 aa).

The active-site Proton acceptor is aspartate 11. Aspartate 132 acts as the Proton donor in catalysis.

This sequence belongs to the HisA/HisF family.

The protein resides in the cytoplasm. The catalysed reaction is 1-(5-phospho-beta-D-ribosyl)-5-[(5-phospho-beta-D-ribosylamino)methylideneamino]imidazole-4-carboxamide = 5-[(5-phospho-1-deoxy-D-ribulos-1-ylimino)methylamino]-1-(5-phospho-beta-D-ribosyl)imidazole-4-carboxamide. It participates in amino-acid biosynthesis; L-histidine biosynthesis; L-histidine from 5-phospho-alpha-D-ribose 1-diphosphate: step 4/9. This chain is 1-(5-phosphoribosyl)-5-[(5-phosphoribosylamino)methylideneamino] imidazole-4-carboxamide isomerase, found in Nitrobacter winogradskyi (strain ATCC 25391 / DSM 10237 / CIP 104748 / NCIMB 11846 / Nb-255).